A 198-amino-acid polypeptide reads, in one-letter code: Ribose 1,5-bisphosphate phosphokinase PhnN (198 aa).

An ATP-binding site is contributed by 25-32; that stretch reads GPSGAGKD.

The protein belongs to the ribose 1,5-bisphosphokinase family.

It carries out the reaction alpha-D-ribose 1,5-bisphosphate + ATP = 5-phospho-alpha-D-ribose 1-diphosphate + ADP. The protein operates within metabolic intermediate biosynthesis; 5-phospho-alpha-D-ribose 1-diphosphate biosynthesis; 5-phospho-alpha-D-ribose 1-diphosphate from D-ribose 5-phosphate (route II): step 3/3. Its function is as follows. Catalyzes the phosphorylation of ribose 1,5-bisphosphate to 5-phospho-D-ribosyl alpha-1-diphosphate (PRPP). The polypeptide is Ribose 1,5-bisphosphate phosphokinase PhnN (Bradyrhizobium diazoefficiens (strain JCM 10833 / BCRC 13528 / IAM 13628 / NBRC 14792 / USDA 110)).